The following is a 123-amino-acid chain: ATP synthase epsilon chain (123 aa).

The protein belongs to the ATPase epsilon chain family. As to quaternary structure, F-type ATPases have 2 components, CF(1) - the catalytic core - and CF(0) - the membrane proton channel. CF(1) has five subunits: alpha(3), beta(3), gamma(1), delta(1), epsilon(1). CF(0) has three main subunits: a, b and c.

It is found in the cell membrane. In terms of biological role, produces ATP from ADP in the presence of a proton gradient across the membrane. This is ATP synthase epsilon chain from Corynebacterium diphtheriae (strain ATCC 700971 / NCTC 13129 / Biotype gravis).